A 583-amino-acid chain; its full sequence is Threonine--tRNA ligase (583 aa).

Positions D185 to P478 are catalytic. Zn(2+) contacts are provided by C278, H329, and H455.

Belongs to the class-II aminoacyl-tRNA synthetase family. As to quaternary structure, homodimer. The cofactor is Zn(2+).

It localises to the cytoplasm. The catalysed reaction is tRNA(Thr) + L-threonine + ATP = L-threonyl-tRNA(Thr) + AMP + diphosphate + H(+). Functionally, catalyzes the attachment of threonine to tRNA(Thr) in a two-step reaction: L-threonine is first activated by ATP to form Thr-AMP and then transferred to the acceptor end of tRNA(Thr). Also edits incorrectly charged L-seryl-tRNA(Thr). This chain is Threonine--tRNA ligase, found in Borrelia recurrentis (strain A1).